A 276-amino-acid polypeptide reads, in one-letter code: MKMINSIFTHGSLIILLLLFHSISIKAQEVDDEREFDYLEGSELGPEKWGELRPEWGTCKRGKMQSPIDISNPVQVTSKELLQTKYKAQNAIINNRGHDIMVRWEGDAGSILINEREFDLLQAHWHAPSEHAINGTRYAMELHMLHRSTDPKLTPTMVVVAVFYEIGDVDPFLSRLGPIMSSLIDQTNEHKQAGVINPMEIQLDDECYYKYIGSLTTPSCTEGVTWIINKRINTVSSDQVKLLREAVHDHAKNNARPLQALNHREVQLHCHKDRKD.

Positions 1–27 are cleaved as a signal peptide; it reads MKMINSIFTHGSLIILLLLFHSISIKA. The 237-residue stretch at 34–270 folds into the Alpha-carbonic anhydrase domain; sequence REFDYLEGSE…LNHREVQLHC (237 aa). The cysteines at positions 59 and 220 are disulfide-linked. The active-site Proton acceptor is the histidine 98. Zn(2+) contacts are provided by histidine 124 and histidine 126. N-linked (GlcNAc...) asparagine glycosylation occurs at asparagine 134. Residue histidine 143 participates in Zn(2+) binding. The tract at residues 216-217 is substrate binding; that stretch reads TT.

This sequence belongs to the alpha-class carbonic anhydrase family. In terms of assembly, homodimer. It depends on Zn(2+) as a cofactor. In terms of tissue distribution, confined to nectaries.

It catalyses the reaction hydrogencarbonate + H(+) = CO2 + H2O. The protein operates within one-carbon metabolism. Involved in the production of blood-red nectar containing the alkaloid nesocodin and that serves as a visual attractant for pollinator visitation, including vertebrates such as Phelsuma geckos. The nectar is initially acidic and pale yellow, but slowly becomes alkaline before turning into red within 24 hours. Together with NEC2 and NEC3, facilitates the condensation of sinapaldehyde ((E)-3,5-dimethoxy-4-hydroxycinnamaldehyde) and proline to form nesocodin, a pigment with a stable imine bond. Mediates the alkalinization (pH increase) of the flower nectar by catalyzing the reversible hydration of carbon dioxide. In Nesocodon mauritianus (Blue Mauritius bellflower), this protein is Carbonic anhydrase Nec1.